The following is a 98-amino-acid chain: MVRIRLTRMGKRHMPFYRIVVVDSRKRRDGAYIESLGYYNPLRKPAEIKVNVERAVEWILKGAQPSETAANILSKAGVLAKVHEMKYGKREKSDEGVS.

This sequence belongs to the bacterial ribosomal protein bS16 family.

The chain is Small ribosomal subunit protein bS16 from Pseudothermotoga lettingae (strain ATCC BAA-301 / DSM 14385 / NBRC 107922 / TMO) (Thermotoga lettingae).